A 190-amino-acid chain; its full sequence is Peptide deformylase (190 aa).

2 residues coordinate Fe cation: Cys106 and His148. Residue Glu149 is part of the active site. His152 serves as a coordination point for Fe cation.

This sequence belongs to the polypeptide deformylase family. The cofactor is Fe(2+).

It catalyses the reaction N-terminal N-formyl-L-methionyl-[peptide] + H2O = N-terminal L-methionyl-[peptide] + formate. In terms of biological role, removes the formyl group from the N-terminal Met of newly synthesized proteins. Requires at least a dipeptide for an efficient rate of reaction. N-terminal L-methionine is a prerequisite for activity but the enzyme has broad specificity at other positions. In Methylacidiphilum infernorum (isolate V4) (Methylokorus infernorum (strain V4)), this protein is Peptide deformylase.